The sequence spans 353 residues: Photosystem II protein D1 (353 aa).

Residue T2 is modified to N-acetylthreonine. At T2 the chain carries Phosphothreonine. 3 consecutive transmembrane segments (helical) span residues 29–46, 118–133, and 142–156; these read YIGWFGVLMIPTLLTATS, HFLLGVACYMGREWEL, and WIAVAYSAPVAAATA. Residue H118 participates in chlorophyll a binding. Y126 provides a ligand contact to pheophytin a. The [CaMn4O5] cluster site is built by D170 and E189. The chain crosses the membrane as a helical span at residues 197 to 218; it reads FHMLGVAGVFGGSLFSAMHGSL. Position 198 (H198) interacts with chlorophyll a. Residues H215 and 264-265 contribute to the a quinone site; that span reads SF. H215 provides a ligand contact to Fe cation. Fe cation is bound at residue H272. Residues 274 to 288 traverse the membrane as a helical segment; that stretch reads FLAAWPVVGIWFTAL. The [CaMn4O5] cluster site is built by H332, E333, D342, and A344. Positions 345-353 are excised as a propeptide; it reads AVEAPSTIG.

The protein belongs to the reaction center PufL/M/PsbA/D family. In terms of assembly, PSII is composed of 1 copy each of membrane proteins PsbA, PsbB, PsbC, PsbD, PsbE, PsbF, PsbH, PsbI, PsbJ, PsbK, PsbL, PsbM, PsbT, PsbX, PsbY, PsbZ, Psb30/Ycf12, at least 3 peripheral proteins of the oxygen-evolving complex and a large number of cofactors. It forms dimeric complexes. Requires The D1/D2 heterodimer binds P680, chlorophylls that are the primary electron donor of PSII, and subsequent electron acceptors. It shares a non-heme iron and each subunit binds pheophytin, quinone, additional chlorophylls, carotenoids and lipids. D1 provides most of the ligands for the Mn4-Ca-O5 cluster of the oxygen-evolving complex (OEC). There is also a Cl(-1) ion associated with D1 and D2, which is required for oxygen evolution. The PSII complex binds additional chlorophylls, carotenoids and specific lipids. as cofactor. Tyr-161 forms a radical intermediate that is referred to as redox-active TyrZ, YZ or Y-Z. Post-translationally, C-terminally processed by CTPA; processing is essential to allow assembly of the oxygen-evolving complex and thus photosynthetic growth.

It localises to the plastid. The protein localises to the chloroplast thylakoid membrane. It catalyses the reaction 2 a plastoquinone + 4 hnu + 2 H2O = 2 a plastoquinol + O2. Its function is as follows. Photosystem II (PSII) is a light-driven water:plastoquinone oxidoreductase that uses light energy to abstract electrons from H(2)O, generating O(2) and a proton gradient subsequently used for ATP formation. It consists of a core antenna complex that captures photons, and an electron transfer chain that converts photonic excitation into a charge separation. The D1/D2 (PsbA/PsbD) reaction center heterodimer binds P680, the primary electron donor of PSII as well as several subsequent electron acceptors. The sequence is that of Photosystem II protein D1 from Lemna minor (Common duckweed).